A 473-amino-acid polypeptide reads, in one-letter code: Probable glucose-6-phosphate 1-dehydrogenase C7.13c (473 aa).

Positions 43, 121, and 144 each coordinate NADP(+). D-glucose 6-phosphate contacts are provided by residues Lys144, 174–178 (HYTAK), Glu213, and Asp232. His237 acts as the Proton acceptor in catalysis. Residue Lys331 coordinates D-glucose 6-phosphate. An NADP(+)-binding site is contributed by Lys341. Gln366 serves as a coordination point for D-glucose 6-phosphate.

It belongs to the glucose-6-phosphate dehydrogenase family.

It localises to the cytoplasm. It catalyses the reaction D-glucose 6-phosphate + NADP(+) = 6-phospho-D-glucono-1,5-lactone + NADPH + H(+). Its pathway is carbohydrate degradation; pentose phosphate pathway; D-ribulose 5-phosphate from D-glucose 6-phosphate (oxidative stage): step 1/3. Its function is as follows. Catalyzes the rate-limiting step of the oxidative pentose-phosphate pathway, which represents a route for the dissimilation of carbohydrates besides glycolysis. The main function of this enzyme is to provide reducing power (NADPH) and pentose phosphates for fatty acid and nucleic acid synthesis. The chain is Probable glucose-6-phosphate 1-dehydrogenase C7.13c from Schizosaccharomyces pombe (strain 972 / ATCC 24843) (Fission yeast).